The primary structure comprises 291 residues: Elongation factor Ts (291 aa).

The interval 79–82 (TDFV) is involved in Mg(2+) ion dislocation from EF-Tu.

This sequence belongs to the EF-Ts family.

The protein localises to the cytoplasm. Associates with the EF-Tu.GDP complex and induces the exchange of GDP to GTP. It remains bound to the aminoacyl-tRNA.EF-Tu.GTP complex up to the GTP hydrolysis stage on the ribosome. The chain is Elongation factor Ts from Leuconostoc mesenteroides subsp. mesenteroides (strain ATCC 8293 / DSM 20343 / BCRC 11652 / CCM 1803 / JCM 6124 / NCDO 523 / NBRC 100496 / NCIMB 8023 / NCTC 12954 / NRRL B-1118 / 37Y).